Reading from the N-terminus, the 840-residue chain is MTPPRPPSGRVRSLRDYSSESEKMDGTGSWDTLEWTKLDSTSGSGSFSNLSCLLESERVIVEGYGVVLINTDEAGTLLVTNFRILFLSEGTRKVIPLGTIPLATIEKFNKMVLKVQSSPRQSDKIPPRRLLQVTGKDMRIIVYGFRPRTKQRRNVFDALLKCTKPERVWDLYTFACGPSKFGNANPKERLLNEYFRLLGKSSIRASMDMIEDGAFTLSNELWRISDLNSNYNLCQTYPFAFMIPKSISDAELLQACSFRARCRLPVITWCQPGSGAVIARSSQPLVGLMMNMRSNLDEKLVAAFCSQLPGAKGERRKLYIADARPRKNALANGAMGGGSESSSNYFQSEIVFFGIDNIHAMRESFSRVRDYLDMHGTTSSDGRSSFLRHGGWTWGGGNLSSMSASVSLLGDSGWLIHIQSVLAGAAWIAARVAMESASVLVHCSDGWDRTTQLVSLACLLLDPYYRTFAGFQALVEKDWLAFGHPFSDRVGMPNISGSGNFDFPRQSSSAGSFPSSPVRQSSGSAASQSSSSSHGHNNYSPIFMQWIDSVSQLMRMYPCAFEFSPTFLVDFMDCLLSCRFGNFLCNSEKEREQCGIADACGCLWAYLTDLRSFSATSHVHCNPFYDPLKYDGPLLPPAASLAPTLWPQFHLRWACPEEAKAADIGVQCRAMTVKYSEMQKEKEAAERRVDEISFAMESLSAELLRERHLSWVARESANRATKEYAALTRAVQSLGCKINFTTSDVEDDPRSSLENNPRRRNRHGNNSDVSVSISLMPEENTSGNPKGRVCEALCPLRTREGVCRWPEVGCAHVGSQFVGLKANFDAFDRLAIYDSYFQPK.

A disordered region spans residues Met1–Gly28. Basic and acidic residues predominate over residues Ser13 to Asp25. Residues Gly45–Val112 form the GRAM domain. The Myotubularin phosphatase domain occupies Gly199–His650. Substrate contacts are provided by residues Asn332–Met335, Asn357–Ile358, Cys443–Arg449, and Arg489. Residue Cys443 is the Phosphocysteine intermediate of the active site. Residues Gln506–Gly535 form a disordered region. Over residues Ser507–Gly535 the composition is skewed to low complexity. Residues Val666–Leu734 are a coiled coil. The segment at Val745–Val771 is disordered.

It belongs to the protein-tyrosine phosphatase family. Non-receptor class myotubularin subfamily. In terms of tissue distribution, mostly expressed in siliques and leaves (including hydathodes), and, to a lower extent, in flowers and roots.

It localises to the cytoplasm. The protein localises to the endosome membrane. It carries out the reaction a 1,2-diacyl-sn-glycero-3-phospho-(1D-myo-inositol-3-phosphate) + H2O = a 1,2-diacyl-sn-glycero-3-phospho-(1D-myo-inositol) + phosphate. The catalysed reaction is a 1,2-diacyl-sn-glycero-3-phospho-(1D-myo-inositol-3,5-bisphosphate) + H2O = a 1,2-diacyl-sn-glycero-3-phospho-(1D-myo-inositol-5-phosphate) + phosphate. In terms of biological role, phosphatase with phosphoinositide 3'-phosphatase activity that can use phosphatidylinositol-3-phosphate (PtdIns3P) and phosphatidylinositol-3,5-diphosphate (PtdIns3,5P(2)) as substrates and produces phosphatidylinositol-5-phosphate (PtdIns5P); participates in pathway(s) that transfer gene regulatory signals to the nucleus. Required for recovery after water deprivation, via the accumulation of PtdIns5P upon dehydration; high PtdIns5P levels mediate ATX1 cytoplasmic localization, thus down-regulating the expression of ATX1-dependent genes. Confers sensitivity to soil-water-deficit stress. The polypeptide is Phosphatidylinositol-3-phosphatase myotubularin-1 (MTM1) (Arabidopsis thaliana (Mouse-ear cress)).